Here is a 247-residue protein sequence, read N- to C-terminus: Probable transcriptional regulatory protein SynWH7803_1972 (247 aa).

The protein belongs to the TACO1 family.

The protein resides in the cytoplasm. The protein is Probable transcriptional regulatory protein SynWH7803_1972 of Synechococcus sp. (strain WH7803).